We begin with the raw amino-acid sequence, 957 residues long: Glycine dehydrogenase (decarboxylating) (957 aa).

N6-(pyridoxal phosphate)lysine is present on Lys-708.

It belongs to the GcvP family. In terms of assembly, the glycine cleavage system is composed of four proteins: P, T, L and H. The cofactor is pyridoxal 5'-phosphate.

The catalysed reaction is N(6)-[(R)-lipoyl]-L-lysyl-[glycine-cleavage complex H protein] + glycine + H(+) = N(6)-[(R)-S(8)-aminomethyldihydrolipoyl]-L-lysyl-[glycine-cleavage complex H protein] + CO2. In terms of biological role, the glycine cleavage system catalyzes the degradation of glycine. The P protein binds the alpha-amino group of glycine through its pyridoxal phosphate cofactor; CO(2) is released and the remaining methylamine moiety is then transferred to the lipoamide cofactor of the H protein. This Salmonella typhimurium (strain LT2 / SGSC1412 / ATCC 700720) protein is Glycine dehydrogenase (decarboxylating).